The following is a 328-amino-acid chain: Glycerol-3-phosphate dehydrogenase [NAD(P)+] (328 aa).

The NADPH site is built by Trp15, Arg35, Arg36, and Lys105. Sn-glycerol 3-phosphate contacts are provided by Lys105 and Gly131. Residue Ala135 participates in NADPH binding. Sn-glycerol 3-phosphate is bound by residues Lys186, Asp239, Ser249, Arg250, and Asn251. Lys186 functions as the Proton acceptor in the catalytic mechanism. NADPH is bound at residue Arg250. NADPH contacts are provided by Val270 and Glu272.

It belongs to the NAD-dependent glycerol-3-phosphate dehydrogenase family.

It is found in the cytoplasm. The catalysed reaction is sn-glycerol 3-phosphate + NAD(+) = dihydroxyacetone phosphate + NADH + H(+). The enzyme catalyses sn-glycerol 3-phosphate + NADP(+) = dihydroxyacetone phosphate + NADPH + H(+). It functions in the pathway membrane lipid metabolism; glycerophospholipid metabolism. Catalyzes the reduction of the glycolytic intermediate dihydroxyacetone phosphate (DHAP) to sn-glycerol 3-phosphate (G3P), the key precursor for phospholipid synthesis. The chain is Glycerol-3-phosphate dehydrogenase [NAD(P)+] from Deinococcus radiodurans (strain ATCC 13939 / DSM 20539 / JCM 16871 / CCUG 27074 / LMG 4051 / NBRC 15346 / NCIMB 9279 / VKM B-1422 / R1).